We begin with the raw amino-acid sequence, 389 residues long: Odorant receptor 85c (389 aa).

Topologically, residues 1–33 (MKFMKYAVFFYTSVGIEPYTIDSRSKKASLWSH) are cytoplasmic. The chain crosses the membrane as a helical span at residues 34–54 (LLFWANVINLSVIVFGEILYL). The Extracellular portion of the chain corresponds to 55–66 (GVAYSDGKFIDA). A helical membrane pass occupies residues 67–87 (VTVLSYIGFVIVGMSKMFFIW). Topologically, residues 88 to 130 (WKKTDLSDLVKELEHIYPNGKAEEEMYRLDRYLRSCSRISITY) are cytoplasmic. The helical transmembrane segment at 131–151 (ALLYSVLIWTFNLFSIMQFLV) threads the bilayer. The Extracellular portion of the chain corresponds to 152–199 (YEKLLKIRVVGQTLPYLMYFPWNWHENWTYYVLLFCQNFAGHTSASGQ). Asparagine 178 carries an N-linked (GlcNAc...) asparagine glycan. The chain crosses the membrane as a helical span at residues 200 to 220 (ISTDLLLCAVATQVVMHFDYL). Over 221 to 259 (ARVVEKQVLDRDWSENSRFLAKTVQYHQRILRLMDVLND) the chain is Cytoplasmic. Residues 260 to 280 (IFGIPLLLNFMVSTFVICFVG) traverse the membrane as a helical segment. Over 281–290 (FQMTVGVPPD) the chain is Extracellular. Residues 291-311 (IMIKLFLFLFSSLSQVYLICH) traverse the membrane as a helical segment. The Cytoplasmic portion of the chain corresponds to 312–359 (YGQLIADASSSLSISAYKQNWQNADIRYRRALVFFIARPQRTTYLKAT). Residues 360–380 (IFMNITRATMTDLLQVSYKFF) traverse the membrane as a helical segment. At 381-389 (ALLRTMYIK) the chain is on the extracellular side.

It belongs to the insect chemoreceptor superfamily. Heteromeric odorant receptor channel (TC 1.A.69) family. Or49a subfamily. As to quaternary structure, interacts with Orco. Complexes exist early in the endomembrane system in olfactory sensory neurons (OSNs), coupling these complexes to the conserved ciliary trafficking pathway.

Its subcellular location is the cell membrane. Odorant receptor which mediates acceptance or avoidance behavior, depending on its substrates. The odorant receptor repertoire encodes a large collection of odor stimuli that vary widely in identity, intensity, and duration. May form a complex with Orco to form odorant-sensing units, providing sensitive and prolonged odorant signaling and calcium permeability. This Drosophila melanogaster (Fruit fly) protein is Odorant receptor 85c (Or85c).